Reading from the N-terminus, the 51-residue chain is Large ribosomal subunit protein bL33 (51 aa).

Positions 1 to 23 are disordered; sequence MRDKIKLESSAGTGHFYTTTKNK. Residues 10–20 are compositionally biased toward polar residues; it reads SAGTGHFYTTT.

This sequence belongs to the bacterial ribosomal protein bL33 family.

The chain is Large ribosomal subunit protein bL33 from Chromobacterium violaceum (strain ATCC 12472 / DSM 30191 / JCM 1249 / CCUG 213 / NBRC 12614 / NCIMB 9131 / NCTC 9757 / MK).